We begin with the raw amino-acid sequence, 122 residues long: UPF0231 protein VSAL_I2591 (122 aa).

This sequence belongs to the UPF0231 family.

This is UPF0231 protein VSAL_I2591 from Aliivibrio salmonicida (strain LFI1238) (Vibrio salmonicida (strain LFI1238)).